The following is a 241-amino-acid chain: Sec-independent protein translocase protein TatC (241 aa).

6 helical membrane passes run 27 to 47, 76 to 96, 122 to 142, 161 to 181, 193 to 213, and 217 to 237; these read LIIV…FSAG, LTMC…YEAF, FVAG…SIVI, IVTN…IIVL, LVKG…FFSP, and LFSQ…SMVL.

The protein belongs to the TatC family. As to quaternary structure, forms a complex with TatA.

The protein resides in the cell membrane. In terms of biological role, part of the twin-arginine translocation (Tat) system that transports large folded proteins containing a characteristic twin-arginine motif in their signal peptide across membranes. The protein is Sec-independent protein translocase protein TatC of Methanocella arvoryzae (strain DSM 22066 / NBRC 105507 / MRE50).